The following is a 299-amino-acid chain: Recombination-associated protein RdgC (299 aa).

Belongs to the RdgC family.

The protein localises to the cytoplasm. The protein resides in the nucleoid. May be involved in recombination. The chain is Recombination-associated protein RdgC from Neisseria meningitidis serogroup A / serotype 4A (strain DSM 15465 / Z2491).